Reading from the N-terminus, the 140-residue chain is Ribosome maturation factor RimP (140 aa).

Belongs to the RimP family.

The protein localises to the cytoplasm. Required for maturation of 30S ribosomal subunits. This chain is Ribosome maturation factor RimP, found in Campylobacter jejuni subsp. jejuni serotype O:6 (strain 81116 / NCTC 11828).